Here is a 1024-residue protein sequence, read N- to C-terminus: Seizure 6-like protein (1024 aa).

Positions 1 to 28 (MPAARPPAAGLRGISLFLALLLGSPAAA) are cleaved as a signal peptide. Residues 29-958 (LERDALPEGD…ETSLEGGNMA (930 aa)) are Extracellular-facing. Disordered stretches follow at residues 33–77 (ALPE…SQSA), 108–184 (RPKH…EVPL), and 212–234 (AHTLPQRPEPGEPGPDMAQEAPQ). S49 is a glycosylation site (O-linked (GalNAc...) serine). A compositionally biased stretch (basic and acidic residues) spans 56–66 (SPGKEHPEERV). Residues 110 to 120 (KHALPPKKKLP) are compositionally biased toward basic residues. Over residues 138-162 (SAATVQRAGSQPASQGLDLLSSSTE) the composition is skewed to polar residues. O-glycosylated at one site stretches follow at residues 147–161 (SQPASQGLDLLSSST) and 176–180 (SEEAS). A disulfide bond links C281 and C308. Residues 281 to 389 (CSVSFSNPEG…GTFQLHYQAF (109 aa)) form the CUB 1 domain. N311, N328, and N350 each carry an N-linked (GlcNAc...) asparagine glycan. The region spanning 391–450 (LSCNFPRRPDSGDVTVMDLHSGGVAHFHCHLGYELQGAKMLTCINASKPHWSSQEPICSA) is the Sushi 1 domain. 2 disulfides stabilise this stretch: C393-C433 and C419-C448. Residues N435, N458, N474, N514, N576, N618, N674, and N742 are each glycosylated (N-linked (GlcNAc...) asparagine). The CUB 2 domain maps to 452-562 (CGGAVHNATI…STFNIRFEAF (111 aa)). Residues 565–626 (GHCYEPYIQN…WNDTEPLCRA (62 aa)) enclose the Sushi 2 domain. 2 cysteine pairs are disulfide-bonded: C567–C609 and C594–C624. The 112-residue stretch at 628 to 739 (CGGELSAVAG…QGFIMNYIEV (112 aa)) folds into the CUB 3 domain. Sushi domains are found at residues 743–802 (DSCS…FCEK), 804–867 (MYCT…HCVS), and 871–932 (LACD…VCKV). Disulfide bonds link C745–C787, C773–C800, C806–C848, C834–C865, C873–C915, and C901–C930. The helical transmembrane segment at 959–979 (LAIFIPVLIISLLLGGAYIYI) threads the bilayer. Over 980–1024 (TRCRYYSNLRLPLMYSHPYSQITVETEFDNPIYETGETREYEVSI) the chain is Cytoplasmic.

It belongs to the SEZ6 family. In terms of processing, O-glycosylated. Widely expressed, including adult and fetal brains and lungs. Not expressed in all lung cancer cell lines.

Its subcellular location is the endoplasmic reticulum membrane. Functionally, may contribute to specialized endoplasmic reticulum functions in neurons. This Homo sapiens (Human) protein is Seizure 6-like protein (SEZ6L).